We begin with the raw amino-acid sequence, 120 residues long: Large ribosomal subunit protein uL18 (120 aa).

The protein belongs to the universal ribosomal protein uL18 family. In terms of assembly, part of the 50S ribosomal subunit; part of the 5S rRNA/L5/L18/L25 subcomplex. Contacts the 5S and 23S rRNAs.

Its function is as follows. This is one of the proteins that bind and probably mediate the attachment of the 5S RNA into the large ribosomal subunit, where it forms part of the central protuberance. The protein is Large ribosomal subunit protein uL18 of Rhizobium etli (strain CIAT 652).